We begin with the raw amino-acid sequence, 374 residues long: Fe(2+) transport protein 1 (374 aa).

The first 33 residues, 1–33 (MATPRTLVPILPPVAALLLLLVAASSIPILAAA), serve as a signal peptide directing secretion. The Extracellular portion of the chain corresponds to 34–62 (QPADACGGAPDQAAADGACHDVPRALRLK). A helical transmembrane segment spans residues 63–83 (LIAIPTILVSSVVGVCLPLLS). The Cytoplasmic portion of the chain corresponds to 84–92 (RSVPALRPD). Residues 93-113 (GGLFAVVKAFASGVILATGYM) form a helical membrane-spanning segment. Topologically, residues 114–137 (HVLPDAFNNLTSPCLPRKPWSEFP) are extracellular. Residues 138–158 (FAAFVAMLAAVSTLMADSLML) form a helical membrane-spanning segment. Residues 159 to 219 (TYYNRSKPRP…ATQVQLRRNR (61 aa)) lie on the Cytoplasmic side of the membrane. The disordered stretch occupies residues 166–199 (PRPSSGGDVAAVADHGESPDQGHRHGHGHGHGHG). Residues 179–188 (DHGESPDQGH) show a composition bias toward basic and acidic residues. Residues 220-240 (VVVQVLEIGIVVHSVVIGLGM) form a helical membrane-spanning segment. Topologically, residues 241-251 (GASQNVCTIRP) are extracellular. A helical membrane pass occupies residues 252–272 (LVAAMCFHQMFEGMGLGGCIL). The Cytoplasmic segment spans residues 273–282 (QAEYGRRMRS). Residues 283-303 (VLVFFFSTTTPFGIALGLALT) traverse the membrane as a helical segment. The Extracellular portion of the chain corresponds to 304–313 (RVYRDNSPTA). The helical transmembrane segment at 314–334 (LIVVGLLNAASAGLLHYMALV) threads the bilayer. Residues 335–353 (ELLAADFMGPKLQGNVRLQ) lie on the Cytoplasmic side of the membrane. The helical transmembrane segment at 354–374 (LAAFLAVLLGAGGMSVMAKWA) threads the bilayer.

It belongs to the ZIP transporter (TC 2.A.5) family. As to expression, expressed in companion cells in the upper region of the root.

The protein resides in the cell membrane. In terms of biological role, iron transporter involved in the uptake of iron from the rhizosphere across the plasma membrane in the root epidermal layer. May also transport other divalent cations. The polypeptide is Fe(2+) transport protein 1 (IRT1) (Oryza sativa subsp. japonica (Rice)).